Reading from the N-terminus, the 118-residue chain is Large ribosomal subunit protein bL20 (118 aa).

This sequence belongs to the bacterial ribosomal protein bL20 family.

In terms of biological role, binds directly to 23S ribosomal RNA and is necessary for the in vitro assembly process of the 50S ribosomal subunit. It is not involved in the protein synthesizing functions of that subunit. The polypeptide is Large ribosomal subunit protein bL20 (Yersinia enterocolitica serotype O:8 / biotype 1B (strain NCTC 13174 / 8081)).